Reading from the N-terminus, the 306-residue chain is Secreted RxLR effector protein 76 (306 aa).

The first 21 residues, 1 to 21, serve as a signal peptide directing secretion; it reads MSGAFYVFTALLLVASDQIAA. The RxLR-dEER motif lies at 48–65; the sequence is RFLRGSRDEPDNLANEER. Residues 105–142 form a disordered region; that stretch reads AAKAVKKRPRGAKAGRKMPRAAEAEAVKKVPRAGTAVK. Over residues 107–123 the composition is skewed to basic residues; that stretch reads KAVKKRPRGAKAGRKMP.

This sequence belongs to the RxLR effector family.

It is found in the secreted. The protein resides in the host nucleus. Its function is as follows. Secreted effector that partially suppresses the host cell death induced by cell death-inducing proteins. This is Secreted RxLR effector protein 76 from Plasmopara viticola (Downy mildew of grapevine).